The following is a 189-amino-acid chain: GTPase KRas (189 aa).

Position 1 is an N-acetylmethionine; in GTPase KRas; alternate (Met1). Thr2 bears the N-acetylthreonine; in GTPase KRas, N-terminally processed mark. Residues 10–18, 29–35, and 59–60 each bind GTP; these read GAGGVGKSA, VDEYDPT, and AG. The Effector region motif lies at 32–40; the sequence is YDPTIEDSY. Residue Thr35 is glycosylated ((Microbial infection) O-linked (Glc) threonine; by P.sordellii toxin TcsL). At Lys104 the chain carries N6-acetyllysine. 116–119 is a GTP binding site; sequence NKCD. Positions 166-185 are hypervariable region; the sequence is YRLKKISKEEKTPGCVKIKK. A Glycyl lysine isopeptide (Lys-Gly) (interchain with G-Cter in ubiquitin) cross-link involves residue Lys170. Cys180 carries the S-palmitoyl cysteine lipid modification. 3 N6-palmitoyl lysine lipidation sites follow: Lys182, Lys184, and Lys185. Cys186 is subject to Cysteine methyl ester. Cys186 carries S-farnesyl cysteine lipidation. A propeptide spans 187–189 (removed in mature form); it reads IIM.

The protein belongs to the small GTPase superfamily. Ras family. In terms of assembly, interacts with PHLPP. Interacts (active GTP-bound form preferentially) with RGS14. Interacts (when farnesylated) with PDE6D; this promotes dissociation from the cell membrane. Interacts with SOS1. Interacts (when farnesylated) with GPR31. Interacts with RAP1GDS1. Interacts (active GTP-bound form) with both SHOC2 and PP1c (all isoforms) to form a tertiary complex; SHOC2 and PP1c preferably bind M-Ras/MRAS, but they also bind K-Ras/KRAS, N-Ras/NRAS and H-Ras/HRAS. Interacts (GTP-bound form) with MAPKAP1/SIN1; inhibiting K-Ras/KRAS activity. As to quaternary structure, interacts with GPR31; in a farnelysation-dependent manner. Post-translationally, acetylation at Lys-104 prevents interaction with guanine nucleotide exchange factors (GEFs). Palmitoylated at Lys-182, Lys-184 and Lys-185. Palmitoylation on lysine residues is promoted by palmitoylation at Cys-180. Lysine-depalmitoylation by SIRT2 promotes its localization to endomembranes in endocytic pathways. In terms of processing, ubiquitinated by the BCR(LZTR1) E3 ubiquitin ligase complex at Lys-170 in a non-degradative manner, leading to inhibit Ras signaling by decreasing Ras association with membranes. Post-translationally, (Microbial infection) Glucosylated at Thr-35 by P.sordellii toxin TcsL.

The protein localises to the cell membrane. It localises to the endomembrane system. Its subcellular location is the cytoplasm. It is found in the cytosol. It catalyses the reaction GTP + H2O = GDP + phosphate + H(+). Its activity is regulated as follows. Alternates between an inactive form bound to GDP and an active form bound to GTP. Activated by a guanine nucleotide-exchange factor (GEF) and inactivated by a GTPase-activating protein (GAP). Interaction with SOS1 promotes exchange of bound GDP to GTP. In terms of biological role, ras proteins bind GDP/GTP and possess intrinsic GTPase activity. Plays an important role in the regulation of cell proliferation. Plays a role in promoting oncogenic events by inducing transcriptional silencing of tumor suppressor genes (TSGs) in colorectal cancer (CRC) cells in a ZNF304-dependent manner. The chain is GTPase KRas (KRAS) from Homo sapiens (Human).